The primary structure comprises 296 residues: Probable transcription factor At1g44810 (296 aa).

The disordered stretch occupies residues 1–119 (MNKKLLNPLE…AKKVSGDDDN (119 aa)). Over residues 19 to 28 (EDVDEEISSG) the composition is skewed to acidic residues. Residues 52-72 (TQTLNSPSTEAPTLDSGSETN) are compositionally biased toward polar residues. Positions 97–119 (RASEGTSSKDIKRAKKVSGDDDN) are enriched in basic and acidic residues.

The protein belongs to the GeBP family.

The chain is Probable transcription factor At1g44810 from Arabidopsis thaliana (Mouse-ear cress).